The primary structure comprises 168 residues: Thiol peroxidase (168 aa).

Residues 19–168 (PQAGSKAQAF…YDAALNVLKA (150 aa)) form the Thioredoxin domain. The Cysteine sulfenic acid (-SOH) intermediate role is filled by Cys-61. The cysteines at positions 61 and 95 are disulfide-linked.

It belongs to the peroxiredoxin family. Tpx subfamily. In terms of assembly, homodimer.

The catalysed reaction is a hydroperoxide + [thioredoxin]-dithiol = an alcohol + [thioredoxin]-disulfide + H2O. Its function is as follows. Thiol-specific peroxidase that catalyzes the reduction of hydrogen peroxide and organic hydroperoxides to water and alcohols, respectively. Plays a role in cell protection against oxidative stress by detoxifying peroxides. The sequence is that of Thiol peroxidase from Salmonella typhimurium (strain LT2 / SGSC1412 / ATCC 700720).